Consider the following 24-residue polypeptide: FFPAIFRLVAKVVPSIICSVTKKC.

Cys18 and Cys24 are oxidised to a cystine.

In terms of tissue distribution, expressed by the skin glands.

The protein resides in the secreted. Functionally, antimicrobial peptide. The sequence is that of Brevinin-1R from Pelophylax ridibundus (Marsh frog).